The chain runs to 282 residues: Elongation factor Ts (282 aa).

An involved in Mg(2+) ion dislocation from EF-Tu region spans residues 80 to 83; it reads TDFV.

Belongs to the EF-Ts family.

Its subcellular location is the cytoplasm. Associates with the EF-Tu.GDP complex and induces the exchange of GDP to GTP. It remains bound to the aminoacyl-tRNA.EF-Tu.GTP complex up to the GTP hydrolysis stage on the ribosome. The chain is Elongation factor Ts (tsf) from Chlamydia trachomatis serovar D (strain ATCC VR-885 / DSM 19411 / UW-3/Cx).